A 953-amino-acid chain; its full sequence is Coatomer subunit beta (953 aa).

Residue Thr-2 is modified to N-acetylthreonine. HEAT repeat units lie at residues 96 to 131, 132 to 168, 240 to 276, 277 to 314, 316 to 353, and 396 to 433; these read HEMILVCDAYRKDLQHPNEFIRGSTLRFLCKLKEAE, LLEPLMPAIRACLEHRHSYVRRNAVLAIYTIYRNFEH, SERARFIRCIYNLLQSSSPAVKYEAAGTLVTLSSAPT, AIKAAAQCYIDLIIKESDNNVKLIVLDRLIELKEHPAH, RVLQDLVMDILRVLSTPDLEVRKKTLQLALDLVSSRNV, and DMAANVIPVLMEFLSDSNEAAAADVLEFVREAIQRFDN. The residue at position 494 (Lys-494) is an N6-acetyllysine.

Oligomeric complex that consists of at least the alpha, beta, beta', gamma, delta, epsilon and zeta subunits. Interacts with ARF1 (myristoylated); this interaction is required for binding of COPB1 to Golgi membranes. Interacts with CAPN8 and PRKCE. Interacts with SCYL1. Interacts with COPG1. Interacts (via trunk domain) with ARF1 (via switch I region); the interaction is direct. Interacts with KCNK2 (via N-terminus); this interaction increases the channel-mediated whole cell currents and promotes plasma membrane expression of KCNK2. Interacts with STX17. Interacts with TMEM115. Interacts with TMEM41B. Proteolytically cleaved between Ser-528 and Ser-529 by CAPN8.

It localises to the cytoplasm. The protein localises to the cytosol. It is found in the golgi apparatus membrane. The protein resides in the cytoplasmic vesicle. Its subcellular location is the COPI-coated vesicle membrane. It localises to the cell membrane. The protein localises to the endoplasmic reticulum-Golgi intermediate compartment. In terms of biological role, the coatomer is a cytosolic protein complex that binds to dilysine motifs and reversibly associates with Golgi non-clathrin-coated vesicles, which further mediate biosynthetic protein transport from the ER, via the Golgi up to the trans Golgi network. Coatomer complex is required for budding from Golgi membranes, and is essential for the retrograde Golgi-to-ER transport of dilysine-tagged proteins. In mammals, the coatomer can only be recruited by membranes associated to ADP-ribosylation factors (ARFs), which are small GTP-binding proteins; the complex also influences the Golgi structural integrity, as well as the processing, activity, and endocytic recycling of LDL receptors. Involved in the Golgi disassembly and reassembly processes during cell cycle. Plays a functional role in facilitating the transport of kappa-type opioid receptor mRNAs into axons and enhances translation of these proteins. Required for limiting lipid storage in lipid droplets. Involved in lipid homeostasis by regulating the presence of perilipin family members PLIN2 and PLIN3 at the lipid droplet surface and promoting the association of adipocyte surface triglyceride lipase (PNPLA2) with the lipid droplet to mediate lipolysis. Involved in autophagy by playing a role in early endosome function. Plays a role in organellar compartmentalization of secretory compartments including endoplasmic reticulum (ER)-Golgi intermediate compartment (ERGIC), Golgi, trans-Golgi network (TGN) and recycling endosomes, and in biosynthetic transport of CAV1. The chain is Coatomer subunit beta (COPB1) from Bos taurus (Bovine).